Consider the following 996-residue polypeptide: MINNELKDIFSSNDFNSKTWINNLLSDCGGSGSSSGNAKSNQQSILTDQNNIKAELEIENICSNYLSKLQLYQIELNISLESITSESLLIVPKSIREVDRIRKESLHLKNRIKSISSKIGEMNNDSPQSMETVSVIEKLDQVKSRMEISIRSLKEAEKLLSFSKTVDQLFSSNDYLMISDKLEEVKQSLSVLSDVPEFREQSKKFNVYQDRLESQLKQPLQQSLQQKDLESCKNYLKIFTNIQRQDKFFIYYYQVRIDPLKLLWNSYSSSSSSSSSSSNFHNWLSKFYDEVLVMINSEFNWLSGLCPIDYIQVLENLIIHLFTTINPNVQSRIDQAITIANQTTQQPIKVNELLSIYKTTCSFLKSLSPIFPNIINSSSTPTTSPAVDKLFKVIFEPYKYFQNKFSEYEIKSVKSQLQSISPILTLQKKSGGGSGGSGNADFTNIIKNIENQFIPKSFQIAQQSIERFFDFTHTTDIDSYVNTVLNQIFTEISLILRDTINELKFITGLTTNYIIGSSGTFPNFNQQQQQINTPSSINGEVDPVKKLTNSHTRSHSRSGSGSGNSNSNSVGTSATLQNWEYFQGAMNLLQSIHQLLNKFQQFDNSTSLNIIHYLGNSNNSNNSSSNNDNDQFICNIRKFLLGKDLNKIQKLQISVQNLENIISSPLPLSSSSSVSKDQSISKKPLLLQESFNQISKLLSISQHFVYETLIYFIKLKLKELPKIVSNEWNNNNNNNNNPSQNNGGGGGGGLSYISQITDHLLTIPQQLDPYSEEELTRFSLSTSLQYPIKTCSNSEDDFYQNLLIQYQREKQFDDEQLLIEKLKEKQEQQQEQQEKEQQQEKEQQDADQDININTNNNNENDENDEDDELEDGIAHQWITIVAKATEKLYLQTIVEIITLNEPSCQQLSNDIGYLFNVLSALGVSAEPLLQKTQSLLEMNRDTFTSFYHQQLHNNNNNNNNNNGNSNNNNNNTNNISLLTNAEKNICNLIGKMRNIK.

Disordered stretches follow at residues 533–571 (TPSS…NSVG), 828–867 (QQQE…DEDD), and 950–974 (QLHN…NTNN). Low complexity predominate over residues 557-571 (RSGSGSGNSNSNSVG). The segment covering 828 to 844 (QQQEQQEKEQQQEKEQQ) has biased composition (basic and acidic residues). Composition is skewed to low complexity over residues 849 to 858 (DININTNNNN) and 953 to 974 (NNNN…NTNN).

It belongs to the COG7 family. As to quaternary structure, component of the conserved oligomeric Golgi complex which is composed of eight different subunits and is required for normal Golgi morphology and localization.

Its subcellular location is the golgi apparatus membrane. Its function is as follows. Required for normal Golgi function. This chain is Conserved oligomeric Golgi complex subunit 7 (cog7), found in Dictyostelium discoideum (Social amoeba).